The chain runs to 474 residues: Siroheme synthase (474 aa).

The tract at residues 1 to 203 is precorrin-2 dehydrogenase /sirohydrochlorin ferrochelatase; it reads MKLFPLFADL…QRPEEAERLL (203 aa). NAD(+) is bound by residues 22-23 and 43-44; these read EI and PA. Ser-128 is subject to Phosphoserine. The uroporphyrinogen-III C-methyltransferase stretch occupies residues 216–474; sequence GSVVLVGAGP…QRPAPAALAA (259 aa). Pro-225 contributes to the S-adenosyl-L-methionine binding site. Residue Asp-248 is the Proton acceptor of the active site. Lys-270 acts as the Proton donor in catalysis. Residues 302 to 304, Ile-307, 332 to 333, Met-384, and Gly-413 each bind S-adenosyl-L-methionine; these read GGD and TA.

It in the N-terminal section; belongs to the precorrin-2 dehydrogenase / sirohydrochlorin ferrochelatase family. The protein in the C-terminal section; belongs to the precorrin methyltransferase family.

It catalyses the reaction uroporphyrinogen III + 2 S-adenosyl-L-methionine = precorrin-2 + 2 S-adenosyl-L-homocysteine + H(+). The catalysed reaction is precorrin-2 + NAD(+) = sirohydrochlorin + NADH + 2 H(+). The enzyme catalyses siroheme + 2 H(+) = sirohydrochlorin + Fe(2+). It functions in the pathway cofactor biosynthesis; adenosylcobalamin biosynthesis; precorrin-2 from uroporphyrinogen III: step 1/1. The protein operates within cofactor biosynthesis; adenosylcobalamin biosynthesis; sirohydrochlorin from precorrin-2: step 1/1. It participates in porphyrin-containing compound metabolism; siroheme biosynthesis; precorrin-2 from uroporphyrinogen III: step 1/1. Its pathway is porphyrin-containing compound metabolism; siroheme biosynthesis; siroheme from sirohydrochlorin: step 1/1. It functions in the pathway porphyrin-containing compound metabolism; siroheme biosynthesis; sirohydrochlorin from precorrin-2: step 1/1. Multifunctional enzyme that catalyzes the SAM-dependent methylations of uroporphyrinogen III at position C-2 and C-7 to form precorrin-2 via precorrin-1. Then it catalyzes the NAD-dependent ring dehydrogenation of precorrin-2 to yield sirohydrochlorin. Finally, it catalyzes the ferrochelation of sirohydrochlorin to yield siroheme. The sequence is that of Siroheme synthase from Bordetella petrii (strain ATCC BAA-461 / DSM 12804 / CCUG 43448).